A 229-amino-acid chain; its full sequence is Synaptogyrin-3 (229 aa).

Residue M1 is modified to N-acetylmethionine. Positions 20 to 172 (FARRPQTLLR…LTVKALQRFR (153 aa)) constitute an MARVEL domain. The next 4 helical transmembrane spans lie at 30–50 (VVSWVFSIAVFGPIVNEGYVN), 70–90 (FGVVLGLGAFIACVAFLLLDV), 105–125 (VLLDLGFSGVWSFLWFVGFCF), and 148–168 (AAIAFSFFSILSWVALTVKAL). The span at 209 to 223 (QSPPFTETLDTSSKG) shows a compositional bias: polar residues. The disordered stretch occupies residues 209–229 (QSPPFTETLDTSSKGYQVPAY).

Belongs to the synaptogyrin family. Interacts (via N-terminus) with SLC6A3 (via N-terminus). May interact with VMAT2. In terms of tissue distribution, specifically expressed in brain. Found in the brain across the dorsal and ventral corpus striatum as well as in the cortex.

Its subcellular location is the cytoplasmic vesicle. The protein localises to the secretory vesicle. The protein resides in the synaptic vesicle membrane. It localises to the synapse. Functionally, may play a role in regulated exocytosis. May indirectly regulate the activity of the plasma membrane dopamine transporter SLC6A3 and thereby regulate dopamine transport back from the synaptic cleft into the presynaptic terminal. This Mus musculus (Mouse) protein is Synaptogyrin-3.